The chain runs to 161 residues: Endoribonuclease YbeY (161 aa).

3 residues coordinate Zn(2+): H121, H125, and H131.

Belongs to the endoribonuclease YbeY family. Zn(2+) serves as cofactor.

It is found in the cytoplasm. Functionally, single strand-specific metallo-endoribonuclease involved in late-stage 70S ribosome quality control and in maturation of the 3' terminus of the 16S rRNA. The protein is Endoribonuclease YbeY of Xanthomonas campestris pv. campestris (strain 8004).